Reading from the N-terminus, the 539-residue chain is Chaperonin GroEL (539 aa).

ATP contacts are provided by residues 29-32 (TLGP), 86-90 (DGTTT), glycine 413, 476-478 (NAA), and aspartate 492.

It belongs to the chaperonin (HSP60) family. In terms of assembly, forms a cylinder of 14 subunits composed of two heptameric rings stacked back-to-back. Interacts with the co-chaperonin GroES.

It is found in the cytoplasm. It catalyses the reaction ATP + H2O + a folded polypeptide = ADP + phosphate + an unfolded polypeptide.. In terms of biological role, together with its co-chaperonin GroES, plays an essential role in assisting protein folding. The GroEL-GroES system forms a nano-cage that allows encapsulation of the non-native substrate proteins and provides a physical environment optimized to promote and accelerate protein folding. This is Chaperonin GroEL from Streptococcus thermophilus (strain CNRZ 1066).